Here is a 408-residue protein sequence, read N- to C-terminus: Putative glutamate--cysteine ligase 2 (408 aa).

Belongs to the glutamate--cysteine ligase type 2 family. YbdK subfamily.

It catalyses the reaction L-cysteine + L-glutamate + ATP = gamma-L-glutamyl-L-cysteine + ADP + phosphate + H(+). In terms of biological role, ATP-dependent carboxylate-amine ligase which exhibits weak glutamate--cysteine ligase activity. The polypeptide is Putative glutamate--cysteine ligase 2 (Bradyrhizobium sp. (strain ORS 278)).